Reading from the N-terminus, the 139-residue chain is Actin-depolymerizing factor 1 (139 aa).

An ADF-H domain is found at 5-139 (ASGMAVHDDC…GLDVIQSRAN (135 aa)).

The protein belongs to the actin-binding proteins ADF family.

Actin-depolymerizing protein. Severs actin filaments (F-actin) and binds to actin monomers. This Petunia hybrida (Petunia) protein is Actin-depolymerizing factor 1 (ADF1).